Here is a 745-residue protein sequence, read N- to C-terminus: Phosphoribosylformylglycinamidine synthase subunit PurL (745 aa).

The active site involves His-47. Tyr-50 and Lys-90 together coordinate ATP. Glu-92 lines the Mg(2+) pocket. Substrate-binding positions include 93-96 and Arg-115; that span reads SHNH. Residue His-94 is the Proton acceptor of the active site. Residue Asp-116 participates in Mg(2+) binding. Gln-240 contacts substrate. Asp-268 contributes to the Mg(2+) binding site. Substrate is bound at residue 312–314; it reads ESQ. Asn-501 and Gly-538 together coordinate ATP. Asn-539 is a Mg(2+) binding site. A substrate-binding site is contributed by Ser-541.

This sequence belongs to the FGAMS family. As to quaternary structure, monomer. Part of the FGAM synthase complex composed of 1 PurL, 1 PurQ and 2 PurS subunits.

It localises to the cytoplasm. The catalysed reaction is N(2)-formyl-N(1)-(5-phospho-beta-D-ribosyl)glycinamide + L-glutamine + ATP + H2O = 2-formamido-N(1)-(5-O-phospho-beta-D-ribosyl)acetamidine + L-glutamate + ADP + phosphate + H(+). It functions in the pathway purine metabolism; IMP biosynthesis via de novo pathway; 5-amino-1-(5-phospho-D-ribosyl)imidazole from N(2)-formyl-N(1)-(5-phospho-D-ribosyl)glycinamide: step 1/2. Part of the phosphoribosylformylglycinamidine synthase complex involved in the purines biosynthetic pathway. Catalyzes the ATP-dependent conversion of formylglycinamide ribonucleotide (FGAR) and glutamine to yield formylglycinamidine ribonucleotide (FGAM) and glutamate. The FGAM synthase complex is composed of three subunits. PurQ produces an ammonia molecule by converting glutamine to glutamate. PurL transfers the ammonia molecule to FGAR to form FGAM in an ATP-dependent manner. PurS interacts with PurQ and PurL and is thought to assist in the transfer of the ammonia molecule from PurQ to PurL. This Leptospira borgpetersenii serovar Hardjo-bovis (strain JB197) protein is Phosphoribosylformylglycinamidine synthase subunit PurL.